Here is a 1214-residue protein sequence, read N- to C-terminus: Delta-latroinsectotoxin-Lt1a (1214 aa).

The tract at residues 64-89 (IGSIPVIGEVVGIVTAPIAIVSHITS) is helix H2 is the probable transmembrane region of the tetrameric pore inserted in the target cell membrane. The segment at 250–269 (ALYALFYGTQTYAAVMFFLL) is helix H8 is the probable transmembrane region of the tetrameric pore inserted in the target cell membrane. 15 ANK repeats span residues 464–497 (DIHRDLYDAALNINKLKAVDEATTLIEKGADIEA), 501–532 (NDRSAMHAVAYRGNNKIALRFLLKNQSIDIEL), 536–565 (NGFTPLHIAAEAGQAGFVKLLINHGADVNA), 570–600 (TNLTPLHLATRSGFSKTVRNLLESPNIKVNE), 604–633 (DGFTPLHTAVMSTYMVVDALLNHPDIDKNA), 637–666 (SGLTPFHLAIINESQEVAESLVESNADLNI), 670–699 (NHMAPIHFAASMGSIKMLRYLISIKDKVSI), 706–734 (NNWTPLHFAIYFKKEDAAKELLKQDDINL), 740–769 (GNLTVLHLAVSTGQINIIKELLKRGSNIEE), 773–802 (EGYTSLHIAAMRKEPEIAVVLIENGADIEA), 806–835 (DNLTPLHSAAKIGRKSTVLYLLEKGADIGA), 839–868 (DGSTALHLAVSGRKMKTVETLLNKGANLKE), 872–901 (NKYLPIHKAIINDDLDMVRLFLEKDPSLKD), 906–936 (EGRTSIMLIVQKLLLELYNYFINNYAETLDE), and 966–994 (VKPTILVTIKLMEYCLKKLREESGAPEGS). Positions 1020–1214 (IVKETNSRYL…IDVHQKMFLR (195 aa)) are cleaved as a propeptide — C-terminal domain cleavage is required for toxin activation.

It belongs to the cationic peptide 01 (latrotoxin) family. 04 (delta-latroinsectotoxin) subfamily. In terms of assembly, homotetramer in membrane. Expressed by the venom gland.

It is found in the secreted. The protein resides in the target cell membrane. Insecticidal presynaptic neurotoxin that induces massive neurotransmitter release at insect (but not vertebrate) neuromuscular junctions. Native toxin forms cation-permeable pores (with high permeability to calcium) in lipid membranes locust muscle membrane and artificial lipid bilayers. May bind to insect neurexin-1 homolog, insect adhesion G protein-coupled receptor L1 homolog, and insect receptor-type tyrosine-protein phosphatase S homolog, and induces neurotransmitter exocytosis both by forming tetrameric pores in membranes and signaling via G protein-coupled receptor. Oligomerization is a process independent of divalent cations. This is Delta-latroinsectotoxin-Lt1a from Latrodectus tredecimguttatus (Mediterranean black widow spider).